The chain runs to 497 residues: Probable malate:quinone oxidoreductase (497 aa).

This sequence belongs to the MQO family. FAD serves as cofactor.

The catalysed reaction is (S)-malate + a quinone = a quinol + oxaloacetate. The protein operates within carbohydrate metabolism; tricarboxylic acid cycle; oxaloacetate from (S)-malate (quinone route): step 1/1. In Wolinella succinogenes (strain ATCC 29543 / DSM 1740 / CCUG 13145 / JCM 31913 / LMG 7466 / NCTC 11488 / FDC 602W) (Vibrio succinogenes), this protein is Probable malate:quinone oxidoreductase.